A 132-amino-acid polypeptide reads, in one-letter code: Replication enhancer protein (132 aa).

Belongs to the geminiviridae replication enhancer protein family. Homooligomer. Interacts with the replication-associated protein (REP). Interacts with host proliferating cell nuclear antigen (PCNA). Interacts with host retinoblastoma-related protein 1 (RBR1), and may thereby deregulate the host cell cycle. Oligomerization and interaction with PCNA are necessary for optimal replication enhancement.

In terms of biological role, increases viral DNA accumulation. Enhances infectivity and symptom expression. The sequence is that of Replication enhancer protein from Abutilon (Upland cotton).